We begin with the raw amino-acid sequence, 83 residues long: Male-specific opa-containing protein (83 aa).

A signal peptide spans 1–18; sequence MNFIQIAVLFVLVAVALA. Residues 23-83 are disordered; that stretch reads DPANLPAPEA…NVNHNVITIG (61 aa). The span at 28–49 shows a compositional bias: low complexity; it reads PAPEAAAAPPAAAAAPPAAAAA. Residues 50–59 show a composition bias toward pro residues; that stretch reads PPAPPAPPAA.

As to expression, adult male abdomen.

Its function is as follows. May be a male specific regulatory factor. This Drosophila melanogaster (Fruit fly) protein is Male-specific opa-containing protein (msopa).